Reading from the N-terminus, the 185-residue chain is ATP-dependent protease subunit HslV (185 aa).

The active site involves Thr-12. Na(+)-binding residues include Ala-168, Cys-171, and Thr-174.

Belongs to the peptidase T1B family. HslV subfamily. In terms of assembly, a double ring-shaped homohexamer of HslV is capped on each side by a ring-shaped HslU homohexamer. The assembly of the HslU/HslV complex is dependent on binding of ATP.

Its subcellular location is the cytoplasm. It carries out the reaction ATP-dependent cleavage of peptide bonds with broad specificity.. Allosterically activated by HslU binding. Its function is as follows. Protease subunit of a proteasome-like degradation complex believed to be a general protein degrading machinery. This chain is ATP-dependent protease subunit HslV, found in Cereibacter sphaeroides (strain ATCC 17029 / ATH 2.4.9) (Rhodobacter sphaeroides).